Reading from the N-terminus, the 83-residue chain is ATP synthase subunit c (83 aa).

The next 2 helical transmembrane spans lie at Ile-10–Leu-30 and Met-52–Phe-72.

This sequence belongs to the ATPase C chain family. In terms of assembly, F-type ATPases have 2 components, F(1) - the catalytic core - and F(0) - the membrane proton channel. F(1) has five subunits: alpha(3), beta(3), gamma(1), delta(1), epsilon(1). F(0) has three main subunits: a(1), b(2) and c(10-14). The alpha and beta chains form an alternating ring which encloses part of the gamma chain. F(1) is attached to F(0) by a central stalk formed by the gamma and epsilon chains, while a peripheral stalk is formed by the delta and b chains.

The protein resides in the cell inner membrane. Its function is as follows. F(1)F(0) ATP synthase produces ATP from ADP in the presence of a proton or sodium gradient. F-type ATPases consist of two structural domains, F(1) containing the extramembraneous catalytic core and F(0) containing the membrane proton channel, linked together by a central stalk and a peripheral stalk. During catalysis, ATP synthesis in the catalytic domain of F(1) is coupled via a rotary mechanism of the central stalk subunits to proton translocation. Key component of the F(0) channel; it plays a direct role in translocation across the membrane. A homomeric c-ring of between 10-14 subunits forms the central stalk rotor element with the F(1) delta and epsilon subunits. The polypeptide is ATP synthase subunit c (Shewanella baltica (strain OS223)).